Reading from the N-terminus, the 322-residue chain is tRNA dimethylallyltransferase (322 aa).

19–26 (GPTASGKT) contributes to the ATP binding site. Position 21–26 (21–26 (TASGKT)) interacts with substrate. Interaction with substrate tRNA regions lie at residues 44–47 (DSAL), 168–172 (QRIQR), and 255–260 (RCVGYR).

The protein belongs to the IPP transferase family. As to quaternary structure, monomer. Requires Mg(2+) as cofactor.

It carries out the reaction adenosine(37) in tRNA + dimethylallyl diphosphate = N(6)-dimethylallyladenosine(37) in tRNA + diphosphate. In terms of biological role, catalyzes the transfer of a dimethylallyl group onto the adenine at position 37 in tRNAs that read codons beginning with uridine, leading to the formation of N6-(dimethylallyl)adenosine (i(6)A). In Cupriavidus taiwanensis (strain DSM 17343 / BCRC 17206 / CCUG 44338 / CIP 107171 / LMG 19424 / R1) (Ralstonia taiwanensis (strain LMG 19424)), this protein is tRNA dimethylallyltransferase.